Consider the following 1234-residue polypeptide: DNA-directed RNA polymerase subunit beta (1234 aa).

Belongs to the RNA polymerase beta chain family. In terms of assembly, the RNAP catalytic core consists of 2 alpha, 1 beta, 1 beta' and 1 omega subunit. When a sigma factor is associated with the core the holoenzyme is formed, which can initiate transcription.

It catalyses the reaction RNA(n) + a ribonucleoside 5'-triphosphate = RNA(n+1) + diphosphate. In terms of biological role, DNA-dependent RNA polymerase catalyzes the transcription of DNA into RNA using the four ribonucleoside triphosphates as substrates. This chain is DNA-directed RNA polymerase subunit beta, found in Clostridium perfringens (strain ATCC 13124 / DSM 756 / JCM 1290 / NCIMB 6125 / NCTC 8237 / Type A).